The chain runs to 541 residues: Mesoderm induction early response protein 2 (541 aa).

At S11 the chain carries Phosphoserine. Disordered regions lie at residues 100-119 and 131-186; these read DPIS…LPDM and LSGE…EEDA. A compositionally biased stretch (polar residues) spans 140–165; it reads QSSADDLTPSVTSHEASDLFHNQSGS. The ELM2 domain occupies 194–291; sequence KEIMVGPQFQ…EALRRLRFNV (98 aa). Positions 296 to 348 constitute an SANT domain; that stretch reads DGLCAWSEEECRNFEHGFRVHGKNFHLIQANKVRTRSVGECVEYYYLWKKSER. The interval 364 to 440 is disordered; sequence VSSGTTDTEQ…EPPAVPSLQQ (77 aa).

As to quaternary structure, part of a complex containing at least CDYL, MIER1, MIER2, HDAC1 and HDAC2.

The protein localises to the nucleus. Its function is as follows. Transcriptional repressor. This Mus musculus (Mouse) protein is Mesoderm induction early response protein 2 (Mier2).